We begin with the raw amino-acid sequence, 450 residues long: Divalent metal cation transporter MntH (450 aa).

The next 11 helical transmembrane spans lie at 34–54, 61–81, 108–128, 141–161, 170–190, 212–232, 263–283, 305–325, 361–381, 383–403, and 422–442; these read LSFL…GNWI, AQYG…AMLL, IAII…IAEV, IPLI…LFIM, AIVG…VYIS, GILY…NLYL, IQLS…ASLF, PVLG…ALLA, SLAV…AAKI, QLLV…LIPL, and VNII…YLIV.

This sequence belongs to the NRAMP family.

It is found in the cell membrane. Functionally, h(+)-stimulated, divalent metal cation uptake system. This chain is Divalent metal cation transporter MntH, found in Staphylococcus aureus (strain Mu3 / ATCC 700698).